The following is a 79-amino-acid chain: MAKLIVNFSALLMIILLVSNGLPKAVAQTCFKGEAQEGVCVKVDGSKLCDLLCRATNTTWFGACEVEDNETHCHCYGPC.

Positions 1-27 are cleaved as a signal peptide; that stretch reads MAKLIVNFSALLMIILLVSNGLPKAVA. 4 disulfides stabilise this stretch: Cys30–Cys79, Cys40–Cys64, Cys49–Cys73, and Cys53–Cys75.

Belongs to the DEFL family.

It localises to the secreted. The chain is Putative defensin-like protein 203 from Arabidopsis thaliana (Mouse-ear cress).